A 506-amino-acid chain; its full sequence is Histidine ammonia-lyase (506 aa).

Residues 143-145 (ASG) constitute a cross-link (5-imidazolinone (Ala-Gly)). S144 is modified (2,3-didehydroalanine (Ser)).

The protein belongs to the PAL/histidase family. In terms of processing, contains an active site 4-methylidene-imidazol-5-one (MIO), which is formed autocatalytically by cyclization and dehydration of residues Ala-Ser-Gly.

It localises to the cytoplasm. It catalyses the reaction L-histidine = trans-urocanate + NH4(+). The protein operates within amino-acid degradation; L-histidine degradation into L-glutamate; N-formimidoyl-L-glutamate from L-histidine: step 1/3. The polypeptide is Histidine ammonia-lyase (Salmonella dublin (strain CT_02021853)).